The chain runs to 210 residues: T-cell surface glycoprotein CD8 beta chain (210 aa).

Residues 1–21 (MRPRLWLLLAAQLAVLHGSSV) form the signal peptide. The Ig-like V-type domain occupies 22-132 (LQQTPAYIKV…ELTFGKGTQL (111 aa)). The Extracellular portion of the chain corresponds to 22 to 170 (LQQTPAYIKV…ETQKGPLCSP (149 aa)). Cysteine 41 and cysteine 116 form a disulfide bridge. Asparagine 102 carries N-linked (GlcNAc...) asparagine glycosylation. The helical transmembrane segment at 171 to 191 (ITLGLLVAGVLVLLVSLGVAI) threads the bilayer. At 192 to 210 (HLCCRRRRARLRFMKQFYK) the chain is on the cytoplasmic side.

As to quaternary structure, forms disulfide-linked heterodimers with CD8A at the cell surface. Interacts with CD3D; this interaction couples TCR-CD3 with CD8. Interacts with LCK. Phosphorylated as a consequence of T-cell activation. Post-translationally, palmitoylated at the cytoplasmic tail and thereby targets the heterodimer CD8A/CD8B to lipid rafts unlike CD8A homodimers.

Its subcellular location is the cell membrane. Its function is as follows. Integral membrane glycoprotein that plays an essential role in the immune response and serves multiple functions in responses against both external and internal offenses. In T-cells, functions primarily as a coreceptor for MHC class I molecule:peptide complex. The antigens presented by class I peptides are derived from cytosolic proteins while class II derived from extracellular proteins. Interacts simultaneously with the T-cell receptor (TCR) and the MHC class I proteins presented by antigen presenting cells (APCs). In turn, recruits the Src kinase LCK to the vicinity of the TCR-CD3 complex. A palmitoylation site in the cytoplasmic tail of CD8B chain contributes to partitioning of CD8 into the plasma membrane lipid rafts where signaling proteins are enriched. Once LCK recruited, it initiates different intracellular signaling pathways by phosphorylating various substrates ultimately leading to lymphokine production, motility, adhesion and activation of cytotoxic T-lymphocytes (CTLs). Additionally, plays a critical role in thymic selection of CD8+ T-cells. This is T-cell surface glycoprotein CD8 beta chain (CD8B) from Pongo pygmaeus (Bornean orangutan).